A 918-amino-acid polypeptide reads, in one-letter code: Translation initiation factor IF-2 (918 aa).

The segment at 39–321 (DDASEKHLRN…KRDGRMKETT (283 aa)) is disordered. The span at 95–146 (KSSNNESTTRNNNNNKNGNQNRNNTNGRPNNNQNRPNNNRNQNNNRNGNRPN) shows a compositional bias: low complexity. The span at 148 to 158 (PKRDEKQDRIR) shows a compositional bias: basic and acidic residues. Low complexity predominate over residues 159 to 174 (ASVAEAARMAAQANRE). The span at 180–190 (PQANRQRTNSA) shows a compositional bias: polar residues. Low complexity-rich tracts occupy residues 201–231 (NNQN…NNRN), 237–267 (SRPN…TANN), and 278–296 (GRNN…QNRP). Over residues 302–313 (RKNKKRNRKAKR) the composition is skewed to basic residues. A tr-type G domain is found at 419-588 (SRPPVVTIMG…LLQAEVLELK (170 aa)). The segment at 428–435 (GHVDHGKT) is G1. 428–435 (GHVDHGKT) is a GTP binding site. Residues 453 to 457 (GITQG) form a G2 region. The segment at 474–477 (DTPG) is G3. GTP is bound by residues 474–478 (DTPGH) and 528–531 (NKID). The segment at 528–531 (NKID) is G4. Residues 564–566 (SAK) form a G5 region.

The protein belongs to the TRAFAC class translation factor GTPase superfamily. Classic translation factor GTPase family. IF-2 subfamily.

Its subcellular location is the cytoplasm. Its function is as follows. One of the essential components for the initiation of protein synthesis. Protects formylmethionyl-tRNA from spontaneous hydrolysis and promotes its binding to the 30S ribosomal subunits. Also involved in the hydrolysis of GTP during the formation of the 70S ribosomal complex. This chain is Translation initiation factor IF-2, found in Pediococcus pentosaceus (strain ATCC 25745 / CCUG 21536 / LMG 10740 / 183-1w).